A 223-amino-acid polypeptide reads, in one-letter code: Small ribosomal subunit protein uS5 (223 aa).

Positions 1-48 (MPGRQRRDGGSGPAGQNGPNSGDNSNARGDNRGGGRDRRDGGRGGNAA) are disordered. Positions 29-42 (GDNRGGGRDRRDGG) are enriched in basic and acidic residues. The S5 DRBM domain maps to 53-116 (FIERVVTINR…EEARKSFFRV (64 aa)).

It belongs to the universal ribosomal protein uS5 family. As to quaternary structure, part of the 30S ribosomal subunit. Contacts proteins S4 and S8.

With S4 and S12 plays an important role in translational accuracy. Its function is as follows. Located at the back of the 30S subunit body where it stabilizes the conformation of the head with respect to the body. This chain is Small ribosomal subunit protein uS5, found in Rhodococcus erythropolis (strain PR4 / NBRC 100887).